The primary structure comprises 139 residues: Maximins 4/H3 type 5 (139 aa).

Residues 1-18 (MNFKYIFAVSFLIASAYA) form the signal peptide. A propeptide spanning residues 19-43 (RSVQNDEQSLSQRDVLEEESLREIR) is cleaved from the precursor. Residue N70 is modified to Asparagine amide. A propeptide spanning residues 74–118 (TAEEHEVMKRLEAVMRDLDSLDHPEEASERETRGFNQDEIAKEKR) is cleaved from the precursor. The residue at position 138 (I138) is an Isoleucine amide.

It belongs to the bombinin family. As to expression, expressed by the skin glands.

The protein resides in the secreted. Functionally, maximin-4 shows antibacterial activity against both Gram-positive and Gram-negative bacteria. It also shows antimicrobial activity against the fungus C.albicans, but not against A.flavus nor P.uticale. It has little hemolytic activity. It does not possess a significant cytotoxicity against tumor cell lines. It does not possess a significant anti-HIV activity. In terms of biological role, maximin-H3 shows antibacterial activity against both Gram-positive and Gram-negative bacteria. It also shows antimicrobial activity against the fungus C.albicans. Shows strong hemolytic activity. The polypeptide is Maximins 4/H3 type 5 (Bombina maxima (Giant fire-bellied toad)).